Reading from the N-terminus, the 829-residue chain is Trimethylamine-N-oxide reductase (829 aa).

The segment at residues 1–31 is a signal peptide (tat-type signal); sequence MNRRDFLKGIASSSFVVLGGSSVLTPLNALA. A Mo-bis(molybdopterin guanine dinucleotide)-binding site is contributed by Ser180.

The protein belongs to the prokaryotic molybdopterin-containing oxidoreductase family. The cofactor is Mo-bis(molybdopterin guanine dinucleotide). Post-translationally, predicted to be exported by the Tat system. The position of the signal peptide cleavage has been experimentally proven.

The protein localises to the periplasm. The catalysed reaction is trimethylamine + 2 Fe(III)-[cytochrome c] + H2O = trimethylamine N-oxide + 2 Fe(II)-[cytochrome c] + 3 H(+). Functionally, reduces trimethylamine-N-oxide (TMAO) into trimethylamine; an anaerobic reaction coupled to energy-yielding reactions. The chain is Trimethylamine-N-oxide reductase (torA) from Shewanella massilia.